Reading from the N-terminus, the 277-residue chain is Cis-2,3-dihydrobiphenyl-2,3-diol dehydrogenase (277 aa).

Residues L9–D36 and D59 each bind NAD(+). S142 lines the substrate pocket. Y155 acts as the Proton acceptor in catalysis. K159 serves as a coordination point for NAD(+).

It belongs to the short-chain dehydrogenases/reductases (SDR) family.

The catalysed reaction is (2R,3S)-3-phenylcyclohexa-3,5-diene-1,2-diol + NAD(+) = biphenyl-2,3-diol + NADH + H(+). The protein operates within xenobiotic degradation; biphenyl degradation; 2-hydroxy-2,4-pentadienoate and benzoate from biphenyl: step 2/4. In Paraburkholderia xenovorans (strain LB400), this protein is Cis-2,3-dihydrobiphenyl-2,3-diol dehydrogenase (bphB).